We begin with the raw amino-acid sequence, 104 residues long: Large ribosomal subunit protein uL23 (104 aa).

This sequence belongs to the universal ribosomal protein uL23 family. Part of the 50S ribosomal subunit. Contacts protein L29, and trigger factor when it is bound to the ribosome.

Functionally, one of the early assembly proteins it binds 23S rRNA. One of the proteins that surrounds the polypeptide exit tunnel on the outside of the ribosome. Forms the main docking site for trigger factor binding to the ribosome. The protein is Large ribosomal subunit protein uL23 of Cupriavidus metallidurans (strain ATCC 43123 / DSM 2839 / NBRC 102507 / CH34) (Ralstonia metallidurans).